Consider the following 1070-residue polypeptide: Error-prone DNA polymerase (1070 aa).

This sequence belongs to the DNA polymerase type-C family. DnaE2 subfamily.

It localises to the cytoplasm. It carries out the reaction DNA(n) + a 2'-deoxyribonucleoside 5'-triphosphate = DNA(n+1) + diphosphate. Its function is as follows. DNA polymerase involved in damage-induced mutagenesis and translesion synthesis (TLS). It is not the major replicative DNA polymerase. The sequence is that of Error-prone DNA polymerase from Aromatoleum aromaticum (strain DSM 19018 / LMG 30748 / EbN1) (Azoarcus sp. (strain EbN1)).